The following is a 1205-amino-acid chain: PAN2-PAN3 deadenylation complex catalytic subunit Pan2 (1205 aa).

WD repeat units lie at residues 153 to 193, 195 to 231, 244 to 280, and 328 to 367; these read DESE…QKYA, ETPG…VEHE, VHGN…AITP, and PVGP…SFNP. The linker stretch occupies residues 368 to 484; sequence YSRETEFALP…PTGREEEPLH (117 aa). A USP domain is found at 485-924; the sequence is TVSKKYRKVT…VPAILYYVKR (440 aa). Phosphoserine is present on serine 784. The Exonuclease domain maps to 975–1147; that stretch reads VGLDAEFVTL…EDARTALQLY (173 aa). The a divalent metal cation site is built by aspartate 978, glutamate 980, aspartate 1087, and aspartate 1139. Residues 1179–1205 are disordered; it reads WKVPEPESQSSPKSKAGLRPGALGWVG. Low complexity predominate over residues 1184–1193; sequence PESQSSPKSK. The residue at position 1189 (serine 1189) is a Phosphoserine.

It belongs to the peptidase C19 family. PAN2 subfamily. As to quaternary structure, forms a heterotrimer with an asymmetric homodimer of the regulatory subunit PAN3 to form the poly(A)-nuclease (PAN) deadenylation complex. Interacts with PAN3 isoform 1/Pan3L and isoform 3/Pan3S. Interacts with ZFP36. A divalent metal cation is required as a cofactor.

It localises to the cytoplasm. It is found in the P-body. The protein resides in the nucleus. The enzyme catalyses Exonucleolytic cleavage of poly(A) to 5'-AMP.. Positively regulated by the regulatory subunit PAN3. In terms of biological role, catalytic subunit of the poly(A)-nuclease (PAN) deadenylation complex, one of two cytoplasmic mRNA deadenylases involved in general and miRNA-mediated mRNA turnover. PAN specifically shortens poly(A) tails of RNA and the activity is stimulated by poly(A)-binding protein (PABP). PAN deadenylation is followed by rapid degradation of the shortened mRNA tails by the CCR4-NOT complex. Deadenylated mRNAs are then degraded by two alternative mechanisms, namely exosome-mediated 3'-5' exonucleolytic degradation, or deadenylation-dependent mRNA decaping and subsequent 5'-3' exonucleolytic degradation by XRN1. Also acts as an important regulator of the HIF1A-mediated hypoxic response. Required for HIF1A mRNA stability independent of poly(A) tail length regulation. The sequence is that of PAN2-PAN3 deadenylation complex catalytic subunit Pan2 from Rattus norvegicus (Rat).